Consider the following 284-residue polypeptide: MMRILLFLATNAAVLIVFNIILSLTGIRGQDAMGLLIMAALFGFTGSIISLLMSKRSALAATGAEVIEQPRNDTERWLLQTVHSQAEKAGLPKPDVAIYHSNDVNAFATGASKNNSLVAVSTALLNNMTRDEAEGVLAHEISHIKNGDMVTMTLLQGVLNTFVIFAARMIARMVANNRSSEESNSGIYFLVAMVLEVVFGFLASMIAMWFSRFREFRADAGSAELAGKQKMIAALKRLQAIHEPQEMDGKLAAFAINGKRGGFTSLFLSHPPLEKRIEALETSK.

Helical transmembrane passes span 4 to 24 (ILLF…ILSL) and 33 to 53 (MGLL…SLLM). Position 139 (histidine 139) interacts with Zn(2+). Residue glutamate 140 is part of the active site. Histidine 143 serves as a coordination point for Zn(2+). The next 2 helical transmembrane spans lie at 147-167 (GDMV…IFAA) and 187-207 (IYFL…SMIA). Glutamate 215 is a Zn(2+) binding site.

Belongs to the peptidase M48B family. The cofactor is Zn(2+).

The protein resides in the cell inner membrane. The chain is Protease HtpX from Mannheimia succiniciproducens (strain KCTC 0769BP / MBEL55E).